The primary structure comprises 318 residues: Deacetoxycephalosporin C hydroxylase (318 aa).

Positions 158–271 constitute a Fe2OG dioxygenase domain; the sequence is DADPVLRLRY…RTSSVFFLRP (114 aa).

The protein belongs to the iron/ascorbate-dependent oxidoreductase family. In terms of assembly, monomer. Fe cation serves as cofactor.

It carries out the reaction deacetoxycephalosporin C + 2-oxoglutarate + O2 = deacetylcephalosporin C + succinate + CO2. Its pathway is antibiotic biosynthesis; cephalosporin C biosynthesis. Its function is as follows. Hydroxylation of desacetoxicephalosporin C in 3'position to form deacetylcephalosporin C. This Streptomyces clavuligerus protein is Deacetoxycephalosporin C hydroxylase (cefF).